A 253-amino-acid chain; its full sequence is Ubiquinone/menaquinone biosynthesis C-methyltransferase UbiE (253 aa).

Residues T76, D97, and 125-126 contribute to the S-adenosyl-L-methionine site; that span reads NA.

It belongs to the class I-like SAM-binding methyltransferase superfamily. MenG/UbiE family.

The catalysed reaction is a 2-demethylmenaquinol + S-adenosyl-L-methionine = a menaquinol + S-adenosyl-L-homocysteine + H(+). It catalyses the reaction a 2-methoxy-6-(all-trans-polyprenyl)benzene-1,4-diol + S-adenosyl-L-methionine = a 5-methoxy-2-methyl-3-(all-trans-polyprenyl)benzene-1,4-diol + S-adenosyl-L-homocysteine + H(+). The protein operates within quinol/quinone metabolism; menaquinone biosynthesis; menaquinol from 1,4-dihydroxy-2-naphthoate: step 2/2. It participates in cofactor biosynthesis; ubiquinone biosynthesis. Methyltransferase required for the conversion of demethylmenaquinol (DMKH2) to menaquinol (MKH2) and the conversion of 2-polyprenyl-6-methoxy-1,4-benzoquinol (DDMQH2) to 2-polyprenyl-3-methyl-6-methoxy-1,4-benzoquinol (DMQH2). The chain is Ubiquinone/menaquinone biosynthesis C-methyltransferase UbiE from Rhodopseudomonas palustris (strain ATCC BAA-98 / CGA009).